Reading from the N-terminus, the 187-residue chain is Elongation factor P (187 aa).

This sequence belongs to the elongation factor P family.

It is found in the cytoplasm. The protein operates within protein biosynthesis; polypeptide chain elongation. Functionally, involved in peptide bond synthesis. Stimulates efficient translation and peptide-bond synthesis on native or reconstituted 70S ribosomes in vitro. Probably functions indirectly by altering the affinity of the ribosome for aminoacyl-tRNA, thus increasing their reactivity as acceptors for peptidyl transferase. This is Elongation factor P from Prochlorococcus marinus (strain NATL1A).